The chain runs to 427 residues: Peptidase B (427 aa).

Lysine 195 and aspartate 200 together coordinate Mn(2+). Lysine 207 is an active-site residue. Mn(2+)-binding residues include aspartate 218, aspartate 277, and glutamate 279. Arginine 281 is an active-site residue.

This sequence belongs to the peptidase M17 family. Homohexamer. It depends on Mn(2+) as a cofactor.

The protein localises to the cytoplasm. It catalyses the reaction Release of an N-terminal amino acid, Xaa, from a peptide or arylamide. Xaa is preferably Glu or Asp but may be other amino acids, including Leu, Met, His, Cys and Gln.. Functionally, probably plays an important role in intracellular peptide degradation. The chain is Peptidase B from Escherichia coli O7:K1 (strain IAI39 / ExPEC).